A 300-amino-acid chain; its full sequence is Bifunctional protein FolD 2 (300 aa).

Residues 165–167 (GRS), Ser190, and Ile231 contribute to the NADP(+) site.

Belongs to the tetrahydrofolate dehydrogenase/cyclohydrolase family. As to quaternary structure, homodimer.

The enzyme catalyses (6R)-5,10-methylene-5,6,7,8-tetrahydrofolate + NADP(+) = (6R)-5,10-methenyltetrahydrofolate + NADPH. It catalyses the reaction (6R)-5,10-methenyltetrahydrofolate + H2O = (6R)-10-formyltetrahydrofolate + H(+). It participates in one-carbon metabolism; tetrahydrofolate interconversion. Its function is as follows. Catalyzes the oxidation of 5,10-methylenetetrahydrofolate to 5,10-methenyltetrahydrofolate and then the hydrolysis of 5,10-methenyltetrahydrofolate to 10-formyltetrahydrofolate. The chain is Bifunctional protein FolD 2 from Pseudomonas syringae pv. tomato (strain ATCC BAA-871 / DC3000).